The primary structure comprises 421 residues: Inhibitor of growth protein 3 (421 aa).

Positions 129–163 are disordered; that stretch reads PSQPVNNHHAHSHTPVEKRKYNPTSHHAAADHIPE. Residues K148, K165, and K167 each participate in a glycyl lysine isopeptide (Lys-Gly) (interchain with G-Cter in SUMO2) cross-link. K181 is modified (N6-acetyllysine). K256 participates in a covalent cross-link: Glycyl lysine isopeptide (Lys-Gly) (interchain with G-Cter in SUMO2). The residue at position 264 (K264) is an N6-acetyllysine. The segment covering 286–296 has biased composition (polar residues); that stretch reads TQNASSSATDS. The interval 286-323 is disordered; that stretch reads TQNASSSATDSRSGRKSKNNTKSSSQQSSSSSSSSSSS. Positions 308 to 323 are enriched in low complexity; the sequence is SSSQQSSSSSSSSSSS. Residues 363–412 form a PHD-type zinc finger; that stretch reads PRYCICNQVSYGEMVGCDNQDCPIEWFHYGCVGLTEAPKGKWFCPQCTAA. Residues C366, C368, C379, C384, H390, C393, C406, and C409 each contribute to the Zn(2+) site.

Belongs to the ING family. Interacts with H3K4me3 and to a lesser extent with H3K4me2. Component of the NuA4 histone acetyltransferase complex which contains the catalytic subunit KAT5/TIP60 and the subunits EP400, TRRAP/PAF400, BRD8/SMAP, EPC1, DMAP1/DNMAP1, RUVBL1/TIP49, RUVBL2, ING3, actin, ACTL6A/BAF53A, MORF4L1/MRG15, MORF4L2/MRGX, MRGBP, YEATS4/GAS41, VPS72/YL1 and MEAF6. The NuA4 complex interacts with MYC. HTATTIP/TIP60, EPC1, and ING3 together constitute a minimal HAT complex termed Piccolo NuA4. Component of a SWR1-like complex.

The protein localises to the nucleus. Its function is as follows. Component of the NuA4 histone acetyltransferase (HAT) complex which is involved in transcriptional activation of select genes principally by acetylation of nucleosomal histones H4 and H2A. This modification may both alter nucleosome - DNA interactions and promote interaction of the modified histones with other proteins which positively regulate transcription. This complex may be required for the activation of transcriptional programs associated with oncogene and proto-oncogene mediated growth induction, tumor suppressor mediated growth arrest and replicative senescence, apoptosis, and DNA repair. NuA4 may also play a direct role in DNA repair when directly recruited to sites of DNA damage. Component of a SWR1-like complex that specifically mediates the removal of histone H2A.Z/H2AZ1 from the nucleosome. In Mus musculus (Mouse), this protein is Inhibitor of growth protein 3 (Ing3).